A 415-amino-acid chain; its full sequence is Arrestin red cell isoform 3 (415 aa).

Belongs to the arrestin family.

It is found in the cytoplasm. The chain is Arrestin red cell isoform 3 from Oncorhynchus mykiss (Rainbow trout).